We begin with the raw amino-acid sequence, 566 residues long: MGRAGGGGPDWGPPPVLLLLGVTLVLTAGAVPARETGSAIEAEELVRSSLAWESRANDTREEAGLPAAGEDETSWTERGSEMAAVGPGVGPEEALEASAAVTGTAWLEADGPGLGGVTAEAGSGDAQTLPATLQAPDEALGSSTMPPAIPEATETSGPPSPAVHDKPSVGPELPKEIPLEVRLNLGGSTPEPTFPLQGTLETQPASDIIDIDYFEGLDSEGRGADMGSFPGSPGTSENHPDTEGETPSWSLLDLYDDFTPFDESDFYPTTSFYDDLEEEEEEEEDKDTVGGGDLEDENDLLLPSQKPGVGPGTGQPTNRWHAVPPQHTLGMVPGSSISLRPRPGDPGKDLASGENGTECRVGFVRHNGSCRSVCDLFPSYCHNGGQCYLVENIGAFCRCNTQDYIWHKGMRCESIITDFQVMCVAVGSAALVLLLLFMMTVFFAKKLYLLKTENTKLRRTNKFRTPSELHNDNFSLSTIAEGSHPNVRKFCDTPRVSSPHARALAHYDNIVCQDDPSAPHKIQDPLKSRLKEEESFNIQNSMSPKLEGGKGDQDDLGVNCLQNNLT.

Positions 1-30 (MGRAGGGGPDWGPPPVLLLLGVTLVLTAGA) are cleaved as a signal peptide. Over 31–423 (VPARETGSAI…SIITDFQVMC (393 aa)) the chain is Extracellular. Residue S38 is glycosylated (O-linked (Xyl...) (chondroitin sulfate) serine). A disordered region spans residues 56-93 (ANDTREEAGLPAAGEDETSWTERGSEMAAVGPGVGPEE). A glycan (N-linked (GlcNAc...) asparagine) is linked at N57. The O-linked (GalNAc...) threonine glycan is linked to T76. Residue S123 is glycosylated (O-linked (Xyl...) (chondroitin sulfate) serine). T132 carries O-linked (GalNAc...) threonine glycosylation. Disordered stretches follow at residues 137–173 (DEAL…GPEL), 218–249 (DSEG…TPSW), and 263–327 (ESDF…PPQH). An O-linked (GalNAc...) serine glycan is attached at S143. O-linked (GalNAc...) threonine glycosylation is found at T144, T153, and T155. O-linked (GalNAc...) serine glycosylation is found at S156 and S160. Residues 163–173 (VHDKPSVGPEL) show a composition bias toward basic and acidic residues. An O-linked (GalNAc...) threonine glycan is attached at T235. Positions 265-301 (DFYPTTSFYDDLEEEEEEEEDKDTVGGGDLEDENDLL) are interaction with TNC and TNR. The segment covering 274 to 286 (DDLEEEEEEEEDK) has biased composition (acidic residues). 2 N-linked (GlcNAc...) asparagine glycosylation sites follow: N355 and N367. The EGF-like domain maps to 371-413 (RSVCDLFPSYCHNGGQCYLVENIGAFCRCNTQDYIWHKGMRCE). Intrachain disulfides connect C374-C387, C381-C397, and C399-C412. A phosphoserine mark is found at G394 and F396. C397 is subject to Phosphothreonine. Residues 424 to 444 (VAVGSAALVLLLLFMMTVFFA) traverse the membrane as a helical segment. Positions 442–460 (FFAKKLYLLKTENTKLRRT) are interaction with GOPC. Residues 445–566 (KKLYLLKTEN…GVNCLQNNLT (122 aa)) lie on the Cytoplasmic side of the membrane. Phosphoserine occurs at positions 467, 475, and 477. A Phosphothreonine modification is found at T478. S483 and S543 each carry phosphoserine. The segment at 531-566 (KEEESFNIQNSMSPKLEGGKGDQDDLGVNCLQNNLT) is disordered.

Binds TNR and probably TNC. Interacts with ERBB3 and GOPC. Interacts with MDK; this interaction is independent of the presence of chondroitin sulfate chains and promotes elongation of oligodendroglial precursor-like cells. In terms of processing, N-glycosylated. Post-translationally, O-glycosylated; contains chondroitin sulfate glycans. Part-time proteoglycan, expressed in part as a proteoglycan exhibiting chondroitin sulfate glycans and in part as a non-proteoglycan form. The relative amount of both forms depends on tissues and tissue maturation. In the cerebellum the 2 forms coexist while in the cerebrum the proteoglycan form is predominant. Phosphorylated; in intracellular and extracellular parts. In terms of tissue distribution, expressed in olfactory bulb, hippocampus, brain stem, spinal cord, cerebrum and cerebellum. Expressed by Purkinje cells in the cerebellum (at protein level). Expressed in immature and mature cerebellum (isoform 1, isoform 2 and isoform 3).

The protein localises to the cell membrane. Its subcellular location is the synaptic cell membrane. It localises to the endoplasmic reticulum membrane. The protein resides in the golgi apparatus membrane. It is found in the cell surface. The protein localises to the secreted. Functionally, may function as a growth and differentiation factor involved in neuritogenesis. May induce ERBB3 activation. This Mus musculus (Mouse) protein is Chondroitin sulfate proteoglycan 5 (Cspg5).